We begin with the raw amino-acid sequence, 563 residues long: Arginine--tRNA ligase (563 aa).

Positions 121–131 (PNIAKPFSIGH) match the 'HIGH' region motif.

This sequence belongs to the class-I aminoacyl-tRNA synthetase family. As to quaternary structure, monomer.

The protein resides in the cytoplasm. The catalysed reaction is tRNA(Arg) + L-arginine + ATP = L-arginyl-tRNA(Arg) + AMP + diphosphate. This is Arginine--tRNA ligase from Streptococcus thermophilus (strain ATCC BAA-250 / LMG 18311).